The chain runs to 373 residues: Dual-specificity RNA methyltransferase RlmN (373 aa).

The Proton acceptor role is filled by Glu94. The Radical SAM core domain occupies 100–339 (EEDRATLCVS…VIVRKTRGDD (240 aa)). Cys107 and Cys344 are joined by a disulfide. Positions 114, 118, and 121 each coordinate [4Fe-4S] cluster. Residues 168–169 (GE), Ser200, 222–224 (SIH), and Asn301 contribute to the S-adenosyl-L-methionine site. Cys344 functions as the S-methylcysteine intermediate in the catalytic mechanism.

Belongs to the radical SAM superfamily. RlmN family. [4Fe-4S] cluster is required as a cofactor.

It is found in the cytoplasm. The catalysed reaction is adenosine(2503) in 23S rRNA + 2 reduced [2Fe-2S]-[ferredoxin] + 2 S-adenosyl-L-methionine = 2-methyladenosine(2503) in 23S rRNA + 5'-deoxyadenosine + L-methionine + 2 oxidized [2Fe-2S]-[ferredoxin] + S-adenosyl-L-homocysteine. It carries out the reaction adenosine(37) in tRNA + 2 reduced [2Fe-2S]-[ferredoxin] + 2 S-adenosyl-L-methionine = 2-methyladenosine(37) in tRNA + 5'-deoxyadenosine + L-methionine + 2 oxidized [2Fe-2S]-[ferredoxin] + S-adenosyl-L-homocysteine. Specifically methylates position 2 of adenine 2503 in 23S rRNA and position 2 of adenine 37 in tRNAs. m2A2503 modification seems to play a crucial role in the proofreading step occurring at the peptidyl transferase center and thus would serve to optimize ribosomal fidelity. The protein is Dual-specificity RNA methyltransferase RlmN of Shewanella sediminis (strain HAW-EB3).